A 113-amino-acid polypeptide reads, in one-letter code: Ferredoxin-1 (113 aa).

4Fe-4S ferredoxin-type domains follow at residues 2–30 (TYIV…YEGE) and 31–60 (NFLV…PDTE). [3Fe-4S] cluster is bound by residues Cys9 and Cys17. Positions 21, 40, 43, and 46 each coordinate [4Fe-4S] cluster. Residue Cys50 participates in [3Fe-4S] cluster binding.

The cofactor is [4Fe-4S] cluster. [3Fe-4S] cluster serves as cofactor.

The polypeptide is Ferredoxin-1 (fdxA) (Caulobacter vibrioides (strain ATCC 19089 / CIP 103742 / CB 15) (Caulobacter crescentus)).